Consider the following 401-residue polypeptide: Pleckstrin homology-like domain family A member 1 (401 aa).

Disordered regions lie at residues 39-67 (IQKR…ARSS), 190-222 (QQQQ…AVAS), and 293-401 (KSTR…SNSA). The 133-residue stretch at 151-283 (LKEGVLEKRS…AEITLQMVQY (133 aa)) folds into the PH domain. Residues 190 to 204 (QQQQQQQQQQQQQQQ) show a composition bias toward low complexity. Positions 308–344 (PSQPQPQPQLQPQPQPQPQPQPQPQSQPQPQPQPKPQ) are enriched in pro residues. The tract at residues 311-346 (PQPQPQLQPQPQPQPQPQPQPQSQPQPQPQPKPQPQ) is 15 X 2 AA repeats of P-Q. The span at 352–378 (PHPHPHPHSHPHSHPHPHPHPHPHQIP) shows a compositional bias: basic residues. Residues 352 to 389 (PHPHPHPHSHPHSHPHPHPHPHPHQIPHPHPQPHSQPH) are 14 X 2 AA repeats of P-H.

Interacts with RPL14, EIF3S7 and PABPC4. As to expression, widely expressed with highest levels in pancreas. Strongly expressed by benign melanocytic nevi, and progressively reduced expressed in primary and metastatic melanomas (at protein level).

It is found in the cytoplasm. It localises to the cytoplasmic vesicle. Its subcellular location is the nucleus. The protein resides in the nucleolus. In terms of biological role, seems to be involved in regulation of apoptosis. May be involved in detachment-mediated programmed cell death. May mediate apoptosis during neuronal development. May be involved in regulation of anti-apoptotic effects of IGF1. May be involved in translational regulation. The sequence is that of Pleckstrin homology-like domain family A member 1 (PHLDA1) from Homo sapiens (Human).